The primary structure comprises 381 residues: 5-amino-6-(D-ribitylamino)uracil--L-tyrosine 4-hydroxyphenyl transferase (381 aa).

Residues 59 to 306 (VTYVVNRNIN…TAVARIFLGN (248 aa)) enclose the Radical SAM core domain. Residues Cys-73, Cys-77, and Cys-80 each contribute to the [4Fe-4S] cluster site.

This sequence belongs to the radical SAM superfamily. CofH family. As to quaternary structure, consists of two subunits, CofG and CofH. The cofactor is [4Fe-4S] cluster.

It catalyses the reaction 5-amino-6-(D-ribitylamino)uracil + L-tyrosine + S-adenosyl-L-methionine = 5-amino-5-(4-hydroxybenzyl)-6-(D-ribitylimino)-5,6-dihydrouracil + 2-iminoacetate + 5'-deoxyadenosine + L-methionine + H(+). Its pathway is cofactor biosynthesis; coenzyme F0 biosynthesis. Functionally, catalyzes the radical-mediated synthesis of 5-amino-5-(4-hydroxybenzyl)-6-(D-ribitylimino)-5,6-dihydrouracil from 5-amino-6-(D-ribitylamino)uracil and L-tyrosine. The chain is 5-amino-6-(D-ribitylamino)uracil--L-tyrosine 4-hydroxyphenyl transferase from Cyanothece sp. (strain PCC 7425 / ATCC 29141).